We begin with the raw amino-acid sequence, 117 residues long: Carboxysome shell protein CcmK4 (117 aa).

Residues 5 to 91 (AVGSLETKGF…PHENVECVLP (87 aa)) enclose the BMC domain.

Belongs to the bacterial microcompartments protein family. CcmK subfamily. In terms of assembly, crystallizes as a homohexamer. Interacts stably with CcmK3, forming heterohexamers that can make dodecamers. Heterohexamers have a 1:2 CcmK3:CcmK4 stoichiometry. Upon expression in E.coli forms large aggregates.

The protein resides in the carboxysome. Its function is as follows. A probably essential, minor shell protein of the carboxysome, a polyhedral inclusion where RuBisCO (ribulose bisphosphate carboxylase, rbcL-rbcS) is sequestered. Hexamers form sheets that form the facets of the polyhedral carboxysome. In PCC 7418 there are several CcmK paralogs with presumably functional differences. This subunit can probably make both homohexamers and heterohexamers with CcmK3. Both hexamers can also make dodecamers, formation depends on buffer conditions. The chain is Carboxysome shell protein CcmK4 from Halothece sp. (strain PCC 7418) (Synechococcus sp. (strain PCC 7418)).